The following is a 595-amino-acid chain: Fructan 1-exohydrolase (595 aa).

Residues 1-20 form the signal peptide; the sequence is MAQAWAFLLPLLVLGSYVTS. D74 is an active-site residue. N167, N235, and N247 each carry an N-linked (GlcNAc...) asparagine glycan. The cysteines at positions 445 and 491 are disulfide-linked. N566 carries an N-linked (GlcNAc...) asparagine glycan.

This sequence belongs to the glycosyl hydrolase 32 family.

The catalysed reaction is Hydrolysis of terminal, non-reducing (2-&gt;1)-linked beta-D-fructofuranose residues in fructans.. Its activity is regulated as follows. Inhibited by sucrose. Its function is as follows. Hydrolyzes inulin-type beta-(2,1)-fructans. May play a role as a beta-(2,1)-trimmer during graminan biosynthesis. This is Fructan 1-exohydrolase from Aegilops speltoides (Goatgrass).